Here is a 424-residue protein sequence, read N- to C-terminus: MHRKHLQEIPDLSSNVATSFTWGWDSSKTSELLSGMGVSALEKEEPDSENIPQELLSNLGHPESPPRKRLKSKGSDKDFVIVRRPKLNRENFPGVSWDSLPDELLLGIFSCLCLPELLKVSGVCKRWYRLASDESLWQTLDLTGKNLHPDVTGRLLSQGVIAFRCPRSFMDQPLAEHFSPFRVQHMDLSNSVIEVSTLHGILSQCSKLQNLSLEGLRLSDPIVNTLAKNSNLVRLNLSGCSGFSEFALQTLLSSCSRLDELNLSWCFDFTEKHVQVAVAHVSETITQLNLSGYRKNLQKSDLSTLVRRCPNLVHLDLSDSVMLKNDCFQEFFQLNYLQHLSLSRCYDIIPETLLELGEIPTLKTLQVFGIVPDGTLQLLKEALPHLQINCSHFTTIARPTIGNKKNQEIWGIKCRLTLQKPSCL.

Residues 1 to 220 (MHRKHLQEIP…LSLEGLRLSD (220 aa)) form a mediates interaction with hepatitis C virus non-structural protein NS5A region. A disordered region spans residues 39 to 73 (SALEKEEPDSENIPQELLSNLGHPESPPRKRLKSK). Serine 64 bears the Phosphoserine mark. The Nuclear localization signal motif lies at 67–73 (RKRLKSK). Residues lysine 68 and lysine 71 each carry the N6-acetyllysine; by p300/EP300 modification. 2 positions are modified to phosphoserine: serine 72 and serine 75. Positions 94–140 (GVSWDSLPDELLLGIFSCLCLPELLKVSGVCKRWYRLASDESLWQTL) constitute an F-box domain. LRR repeat units follow at residues 151–176 (VTGR…PLAE), 177–204 (HFSP…ILSQ), 210–234 (NLSL…NLVR), 235–257 (LNLS…SCSR), 258–284 (LDEL…VSET), 286–308 (TQLN…LVRR), 309–330 (CPNL…CFQE), 334–356 (LNYL…LLEL), 359–378 (IPTL…TLQL), and 380–401 (KEAL…RPTI). Serine 179 carries the post-translational modification Phosphoserine. Residues 402 to 424 (GNKKNQEIWGIKCRLTLQKPSCL) are mediates interaction with IFI27.

As to quaternary structure, part of a SCF(SKP2) complex consisting of CUL1, RBX1, SKP1 and SKP2. Component of a SCF(SKP2)-like complex containing CUL1, SKP1, TRIM21 and SKP2. Interacts directly with CUL1 and SKP1. Interacts with CKS1. Interacts with ASB2 which is the substrate-recognition component of a probable ECS E3 ubiquitin-protein ligase complex; ASB2 is likely to bridge the formation of dimeric E3-ubiquitin-protein ligase complexes composed of an ECS complex and an SCF(SKP2) complex. Interacts with the cyclin-A-CDK2 complex. Interacts with ORC1, phosphorylated CDT1, phosphorylated RBL2, ELF4, phosphorylated RAG2, FOXO1, UBP43, MYC, TOB1, TAL1 and KMT2A/MLL1. Interacts with TRIM21. Interacts with cyclin-E. Interacts with IFI27; promotes the ubiquitin-mediated proteasomal degradation of hepatitis C virus/HCV non-structural protein NS5A. Interacts with CARM1. In terms of assembly, (Microbial infection) Interacts with hepatitis C virus/HCV non-structural protein NS5A; promotes the ubiquitin-mediated proteasomal degradation of NS5A. Post-translationally, phosphorylated on serine and threonine resudues in response to DNA damage, promoting 'Lys-63'-linked ubiquitination of NBN. In terms of processing, ubiquitinated by the APC/C complex, leading to its degradation by the proteasome. Deubiquitinated by USP13. Acetylation at Lys-68 and Lys-71 increases stability through impairment of APC/C-mediated proteolysis and promotes cytoplasmic retention. Deacetylated by SIRT3.

Its subcellular location is the cytoplasm. It localises to the nucleus. Its pathway is protein modification; protein ubiquitination. Substrate recognition component of a SCF (SKP1-CUL1-F-box protein) E3 ubiquitin-protein ligase complex which mediates the ubiquitination and subsequent proteasomal degradation of target proteins involved in cell cycle progression, signal transduction and transcription. Specifically recognizes phosphorylated CDKN1B/p27kip and is involved in regulation of G1/S transition. Degradation of CDKN1B/p27kip also requires CKS1. Recognizes target proteins ORC1, CDT1, RBL2, KMT2A/MLL1, CDK9, RAG2, NBN, FOXO1, UBP43, YTHDF2, and probably MYC, TOB1 and TAL1. Degradation of TAL1 also requires STUB1. Recognizes CDKN1A in association with CCNE1 or CCNE2 and CDK2. Promotes ubiquitination and destruction of CDH1 in a CK1-dependent manner, thereby regulating cell migration. Following phosphorylation in response to DNA damage, mediates 'Lys-63'-linked ubiquitination of NBN, promoting ATM recruitment to DNA damage sites and DNA repair via homologous recombination. Functionally, through the ubiquitin-mediated proteasomal degradation of hepatitis C virus non-structural protein 5A, has an antiviral activity towards that virus. This is S-phase kinase-associated protein 2 (SKP2) from Homo sapiens (Human).